The sequence spans 610 residues: Synaptotagmin-like protein 3 (610 aa).

Positions E4 to E123 constitute a RabBD domain. Residues R219–T239 are disordered. C2 domains lie at V306–F428 and R462–T603.

Monomer. Binds NRXN1. Binds RAB27A that has been activated by GTP-binding via its N-terminus.

It is found in the endomembrane system. In terms of biological role, may act as Rab effector protein and play a role in vesicle trafficking. Binds phospholipids in the presence of calcium ions. The chain is Synaptotagmin-like protein 3 (SYTL3) from Homo sapiens (Human).